Reading from the N-terminus, the 686-residue chain is Mitochondrial Rho GTPase 1 (686 aa).

At 1 to 648 (MPRRDLVRIV…PAQRIRVVAR (648 aa)) the chain is on the cytoplasmic side. The Miro 1 domain occupies 4-172 (RDLVRIVLVG…FYFAQKAVLH (169 aa)). Residues 13-20 (GDDGVGKS), 59-63 (DTSSN), and 117-120 (NKID) contribute to the GTP site. 2 EF-hand domains span residues 188–223 (KCLE…CFST) and 341–376 (LGNQ…SPGN). Positions 201, 203, 205, 212, 354, 356, 358, and 365 each coordinate Ca(2+). Residues 455–624 (RNVFLCYVLG…WVAITRVALD (170 aa)) form the Miro 2 domain. GTP contacts are provided by residues 464 to 471 (GATGSGKT), 506 to 510 (EMEGV), and 574 to 577 (TKSD). A helical; Anchor for type IV membrane protein membrane pass occupies residues 649–665 (WGLAATTISAIVAVWMK). Residues 666-686 (WQGYSFKGIWGWMAKFAGLRT) are Mitochondrial intermembrane-facing.

Belongs to the mitochondrial Rho GTPase family.

It is found in the mitochondrion outer membrane. Functionally, mitochondrial GTPase involved in mitochondrial trafficking. Probably involved in control of anterograde transport of mitochondria and their subcellular distribution. The protein is Mitochondrial Rho GTPase 1 (GEM1) of Cryptococcus neoformans var. neoformans serotype D (strain B-3501A) (Filobasidiella neoformans).